The chain runs to 218 residues: Small ribosomal subunit protein uS3 (218 aa).

The KH type-2 domain occupies 38 to 106 (IRKFIATKLA…RVHINIVEIK (69 aa)).

Belongs to the universal ribosomal protein uS3 family. Part of the 30S ribosomal subunit. Forms a tight complex with proteins S10 and S14.

In terms of biological role, binds the lower part of the 30S subunit head. Binds mRNA in the 70S ribosome, positioning it for translation. In Enterococcus faecalis (strain ATCC 700802 / V583), this protein is Small ribosomal subunit protein uS3.